We begin with the raw amino-acid sequence, 476 residues long: GTPase Der (476 aa).

EngA-type G domains are found at residues 3–167 and 205–380; these read FTVA…GEER and LRVA…KVWN. GTP is bound by residues 9–16, 56–60, 119–122, 211–218, 258–262, and 323–326; these read GRPNVGKS, DTAGL, NKSE, GRPNAGKS, DTAGM, and NKWD. One can recognise a KH-like domain in the interval 381–465; the sequence is RRISTARLNR…PIRVHFRASE (85 aa).

It belongs to the TRAFAC class TrmE-Era-EngA-EngB-Septin-like GTPase superfamily. EngA (Der) GTPase family. In terms of assembly, associates with the 50S ribosomal subunit.

GTPase that plays an essential role in the late steps of ribosome biogenesis. In Rhizobium meliloti (strain 1021) (Ensifer meliloti), this protein is GTPase Der.